The sequence spans 310 residues: Regulator of microtubule dynamics protein 1 (310 aa).

K165 is modified (N6-succinyllysine). TPR repeat units follow at residues 168–204 (AICISDVGDYEGIKVKIANAYVIKEHFEKAIELNPKD) and 222–258 (PWYQRRIAEVLFANPPSSTYEEALKYFHRAEEVDPNF).

This sequence belongs to the RMDN family. In terms of assembly, interacts with microtubules.

Its subcellular location is the cytoplasm. The protein localises to the cytoskeleton. It is found in the spindle. It localises to the spindle pole. This chain is Regulator of microtubule dynamics protein 1 (Rmdn1), found in Rattus norvegicus (Rat).